We begin with the raw amino-acid sequence, 249 residues long: Probable phosphatase Shal_1519 (249 aa).

Residues His-8, His-10, His-16, His-41, Glu-74, His-102, His-132, Asp-193, and His-195 each coordinate Zn(2+).

Belongs to the PHP family. Zn(2+) is required as a cofactor.

The chain is Probable phosphatase Shal_1519 from Shewanella halifaxensis (strain HAW-EB4).